The chain runs to 356 residues: Protein RecA (356 aa).

78–85 (GPESSGKT) lines the ATP pocket.

Belongs to the RecA family.

It is found in the cytoplasm. Its function is as follows. Can catalyze the hydrolysis of ATP in the presence of single-stranded DNA, the ATP-dependent uptake of single-stranded DNA by duplex DNA, and the ATP-dependent hybridization of homologous single-stranded DNAs. It interacts with LexA causing its activation and leading to its autocatalytic cleavage. In Paracoccus denitrificans, this protein is Protein RecA.